A 269-amino-acid chain; its full sequence is Protein TORNADO 2 (269 aa).

At 1-10 (MPLSNNVIGC) the chain is on the cytoplasmic side. A helical transmembrane segment spans residues 11 to 31 (INFITVLLSIPVIGAGIWLAI). The Extracellular segment spans residues 32–44 (GTVNSCVKLLQWP). A helical transmembrane segment spans residues 45–65 (VIILGVLILLVGLAGFIGGFW). Residues 66-71 (RITWLL) are Cytoplasmic-facing. A helical membrane pass occupies residues 72–92 (VVYLIAMLILIVLLGCLVGFI). The Extracellular segment spans residues 93 to 231 (YMVTIRGSGH…NIKVDWLKAD (139 aa)). An N-linked (GlcNAc...) asparagine glycan is attached at Asn-200. The chain crosses the membrane as a helical span at residues 232-252 (IFLLLALIGLIIVYIIGCCAF). Residues 253 to 269 (RNAETEDIFRKYKQGYT) are Cytoplasmic-facing.

The protein belongs to the tetraspanin (TM4SF) family. In terms of tissue distribution, expressed in seedlings, roots, leaves, stems, apex, siliques and flowers. Present in ovules, prominently in nucellus and integuments.

The protein resides in the membrane. Functionally, involved in the basipetal transport of auxin (IAA) that modulates growth and organs organization, as well as cell differentiation. Regulates shoot apical meristem (SAM) organization in the peripheral zone. Required for initial meristematic divisions in the epidermal/lateral root cap leading to the formation of epidermal cells and a clone of lateral root cap cells, as well as for the maintenance of the radial pattern of cell specification in the root, thus regulating the distinction between the lateral root cap and epidermis. Together with WIH peptides, promotes megasporogenesis. This Arabidopsis thaliana (Mouse-ear cress) protein is Protein TORNADO 2 (TRN2).